A 260-amino-acid chain; its full sequence is UPF0246 protein Veis_4789 (260 aa).

It belongs to the UPF0246 family.

The protein is UPF0246 protein Veis_4789 of Verminephrobacter eiseniae (strain EF01-2).